The sequence spans 1072 residues: Teashirt homolog 3 (1072 aa).

3 disordered regions span residues 44–71, 130–153, and 228–247; these read ACPS…SETS, PSSE…CGSG, and HYRD…WSKP. Basic and acidic residues predominate over residues 57–71; sequence SSHEMDSESHISETS. 2 consecutive C2H2-type zinc fingers follow at residues 204-228 and 265-289; these read FRCK…ETGH and LKCM…KTKH. The span at 228–237 shows a compositional bias: basic and acidic residues; the sequence is HYRDDNHETD. Positions 315-336 are disordered; sequence SLELELPSSPDSTGGTPKATLS. Residues 376–400 form a C2H2-type 3; atypical zinc finger; it reads LKCMECGSSHDTLQELTAHMMVTGH. A compositionally biased stretch (basic and acidic residues) spans 469–481; it reads AVLDEKPKEKEKA. Disordered stretches follow at residues 469–489, 569–594, 616–690, 784–815, and 846–888; these read AVLD…EKYD, NSEI…PMPK, EKMK…PLSG, TKGK…TVTT, and TESH…RQSN. Polar residues-rich tracts occupy residues 571-593 and 649-660; these read EIVS…SPMP and SSGSGFKSQENS. At Ser672 the chain carries Phosphoserine. Composition is skewed to low complexity over residues 791–815 and 847–860; these read GCSL…TVTT and ESHT…SSIS. The segment at residues 882-952 is a DNA-binding region (homeobox; atypical); that stretch reads RKGRQSNWNP…NVKYQLRRTG (71 aa). C2H2-type zinc fingers lie at residues 967 to 989 and 1032 to 1055; these read FFCN…LESH and YQCK…SKTH.

The protein belongs to the teashirt C2H2-type zinc-finger protein family. Interacts (via N-terminus) with HDAC1 and HDAC2; the interaction is direct. Found in a trimeric complex with APBB1 and HDAC1; the interaction between HDAC1 and APBB1 is mediated by TSHZ3. Interacts (via homeobox domain) with APBB1 (via PID domain 1). As to expression, expressed in cortical neurons.

It is found in the nucleus. The protein resides in the cell projection. It localises to the growth cone. Its function is as follows. Transcriptional regulator involved in developmental processes. Functions in association with APBB1, SET and HDAC factors as a transcriptional repressor, that inhibits the expression of CASP4. TSHZ3-mediated transcription repression involves the recruitment of histone deacetylases HDAC1 and HDAC2. Associates with chromatin in a region surrounding the CASP4 transcriptional start site(s). Regulates the development of neurons involved in both respiratory rhythm and airflow control. Promotes maintenance of nucleus ambiguus (nA) motoneurons, which govern upper airway function, and establishes a respiratory rhythm generator (RRG) activity compatible with survival at birth. Involved in the differentiation of the proximal uretic smooth muscle cells during developmental processes. Involved in the up-regulation of myocardin, that directs the expression of smooth muscle cells in the proximal ureter. Involved in the modulation of glutamatergic synaptic transmission and long-term synaptic potentiation. This is Teashirt homolog 3 (Tshz3) from Rattus norvegicus (Rat).